We begin with the raw amino-acid sequence, 535 residues long: CTP synthase (535 aa).

An amidoligase domain region spans residues 1 to 267 (MTKYIFVTGG…DQIVCDHLKL (267 aa)). Ser13 contributes to the CTP binding site. Ser13 contacts UTP. 14 to 19 (SLGKGI) serves as a coordination point for ATP. An L-glutamine-binding site is contributed by Tyr54. Asp71 provides a ligand contact to ATP. Asp71 and Glu141 together coordinate Mg(2+). Residues 148 to 150 (DIE), 188 to 193 (KTKPTQ), and Lys224 contribute to the CTP site. Residues 188–193 (KTKPTQ) and Lys224 contribute to the UTP site. 240–242 (RDA) contacts ATP. A Glutamine amidotransferase type-1 domain is found at 292–534 (KIALVGKYVE…VRASITNKES (243 aa)). Gly354 is an L-glutamine binding site. The active-site Nucleophile; for glutamine hydrolysis is Cys381. Residues 382-385 (LGMQ), Glu405, and Arg462 contribute to the L-glutamine site. Residues His507 and Glu509 contribute to the active site.

The protein belongs to the CTP synthase family. Homotetramer.

The catalysed reaction is UTP + L-glutamine + ATP + H2O = CTP + L-glutamate + ADP + phosphate + 2 H(+). It catalyses the reaction L-glutamine + H2O = L-glutamate + NH4(+). The enzyme catalyses UTP + NH4(+) + ATP = CTP + ADP + phosphate + 2 H(+). It participates in pyrimidine metabolism; CTP biosynthesis via de novo pathway; CTP from UDP: step 2/2. With respect to regulation, allosterically activated by GTP, when glutamine is the substrate; GTP has no effect on the reaction when ammonia is the substrate. The allosteric effector GTP functions by stabilizing the protein conformation that binds the tetrahedral intermediate(s) formed during glutamine hydrolysis. Inhibited by the product CTP, via allosteric rather than competitive inhibition. In terms of biological role, catalyzes the ATP-dependent amination of UTP to CTP with either L-glutamine or ammonia as the source of nitrogen. Regulates intracellular CTP levels through interactions with the four ribonucleotide triphosphates. This is CTP synthase from Bacillus cereus (strain ATCC 10987 / NRS 248).